Here is a 228-residue protein sequence, read N- to C-terminus: Deoxyguanosine kinase (228 aa).

8–16 (GPIGAGKSS) lines the ATP pocket. Positions 32, 44, and 55 each coordinate substrate. D78 serves as the catalytic Proton acceptor. Residues R79, D84, and E149 each contribute to the substrate site.

This sequence belongs to the DCK/DGK family. Heterodimer of a deoxyadenosine (DAK) and a deoxyguanosine kinase (DGK).

It catalyses the reaction 2'-deoxyguanosine + ATP = dGMP + ADP + H(+). Functionally, DGK/DAK plays an essential role in generating the deoxyribonucleotide precursors, dGTP and dATP, for DNA metabolism. This chain is Deoxyguanosine kinase, found in Lactobacillus acidophilus (strain ATCC 700396 / NCK56 / N2 / NCFM).